A 1481-amino-acid chain; its full sequence is Coiled-coil domain-containing protein 88B (1481 aa).

Coiled coils occupy residues 200 to 225 (ELVAEELEMQLRSLTGMMSRLARERD) and 258 to 491 (SHHL…GSQH). 3 disordered regions span residues 430–458 (ELQRSLEPPPGSPGEASLPGAAPSLQDEV), 494–731 (LEEQ…AIPE), and 1331–1481 (PRRE…SLSQ). Residue Ser-441 is modified to Phosphoserine. Composition is skewed to polar residues over residues 542–557 (ASYSDITRSPKCSQAP) and 568–590 (QMVSQDPQTSDQALQESDPTVET). Ser-649 is modified (phosphoserine). Positions 660 to 695 (TLREPLKDQKALDRELELSKQQKETGRHEQRPKGLE) are enriched in basic and acidic residues. Residues 731–1308 (EEQALRDEVA…KIMDQYRVLE (578 aa)) are a coiled coil. Phosphoserine occurs at positions 1353 and 1384. Residues 1371–1386 (TGSSSPAPMRRVQSSL) show a composition bias toward polar residues. A compositionally biased stretch (basic and acidic residues) spans 1453–1472 (LSEHEADDTREAFQEQKPEK).

Belongs to the CCDC88 family. Homodimer. Interacts with DOCK8. Interacts (via C-terminus) with intact microtubules. Interacts with dynein-dynactin motor complex. Interacts (via C-terminus) with HSPA5. As to expression, abundantly expressed in immune cells, including both CD4(+) and CD8(+) T-cells and in myeloid cells (at protein level). Expressed in endothelium (at protein level). Expressed specifically in spleen, bone marrow, lymph nodes and thymus. Expressed in liver and heart.

Its subcellular location is the membrane. The protein resides in the cytoplasm. It localises to the cytoskeleton. The protein localises to the microtubule organizing center. It is found in the endoplasmic reticulum. Its subcellular location is the golgi apparatus. Its function is as follows. Acts as a positive regulator of T-cell maturation and inflammatory function. Required for several functions of T-cells in both the CD4(+) and the CD8(+) compartments and this includes expression of cell surface markers of activation, proliferation, and cytokine production in response to specific or non-specific stimulation and during the course of infection with the mouse malaria parasite Plasmodium berghei. Enhances NK cell cytotoxicity by positively regulating polarization of microtubule-organizing center (MTOC) to cytotoxic synapse, lytic granule transport along microtubules, and dynein-mediated clustering to MTOC. Interacts with HSPA5 and stabilizes the interaction between HSPA5 and ERN1, leading to suppression of ERN1-induced JNK activation and endoplasmic reticulum stress-induced apoptosis. The sequence is that of Coiled-coil domain-containing protein 88B (Ccdc88b) from Mus musculus (Mouse).